Here is a 226-residue protein sequence, read N- to C-terminus: PKHD-type hydroxylase Pfl01_0799 (226 aa).

One can recognise a Fe2OG dioxygenase domain in the interval 78-178 (KVFPPLLNCY…RYASFFWTQS (101 aa)). Residues His96, Asp98, and His159 each contribute to the Fe cation site. Arg169 is a binding site for 2-oxoglutarate.

Fe(2+) is required as a cofactor. L-ascorbate serves as cofactor.

The chain is PKHD-type hydroxylase Pfl01_0799 from Pseudomonas fluorescens (strain Pf0-1).